A 379-amino-acid chain; its full sequence is DNA (cytosine-5)-methyltransferase (379 aa).

Residues 4–366 enclose the SAM-dependent MTase C5-type domain; it reads LRVLEFYSGI…KVLVSPNEEE (363 aa). The active site involves C78. A compositionally biased stretch (basic and acidic residues) spans 178-192; the sequence is KKEQDKHNEKVDENK. Residues 178–205 are disordered; that stretch reads KKEQDKHNEKVDENKLNNNSNNNNEQNK. The segment covering 193–203 has biased composition (low complexity); it reads LNNNSNNNNEQ.

It belongs to the class I-like SAM-binding methyltransferase superfamily. C5-methyltransferase family.

Its subcellular location is the nucleus. The catalysed reaction is a 2'-deoxycytidine in DNA + S-adenosyl-L-methionine = a 5-methyl-2'-deoxycytidine in DNA + S-adenosyl-L-homocysteine + H(+). In terms of biological role, involved in epigenetic gene silencing. Methylates specific cytosine residues in the retrotransposons DIRS-1 and Skipper. This Dictyostelium discoideum (Social amoeba) protein is DNA (cytosine-5)-methyltransferase (dnmA).